We begin with the raw amino-acid sequence, 337 residues long: Phosphoenolpyruvate transferase (337 aa).

7,8-didemethyl-8-hydroxy-5-deazariboflavin is bound at residue Asp69.

The protein belongs to the CofD family. In terms of assembly, homodimer. Mg(2+) is required as a cofactor.

The catalysed reaction is enolpyruvoyl-2-diphospho-5'-guanosine + 7,8-didemethyl-8-hydroxy-5-deazariboflavin = dehydro coenzyme F420-0 + GMP + H(+). It functions in the pathway cofactor biosynthesis; coenzyme F420 biosynthesis. Its function is as follows. Catalyzes the transfer of the phosphoenolpyruvate moiety from enoylpyruvoyl-2-diphospho-5'-guanosine (EPPG) to 7,8-didemethyl-8-hydroxy-5-deazariboflavin (FO) with the formation of dehydro coenzyme F420-0 and GMP. The chain is Phosphoenolpyruvate transferase from Mycobacterium avium (strain 104).